The following is a 534-amino-acid chain: Pentatricopeptide repeat-containing protein At5g59600 (534 aa).

PPR repeat units lie at residues 50–80 (LTRIAAKLVTFYVECGKVLDARKVFDEMPKR), 81–115 (DISGCVVMIGACARNGYYQESLDFFREMYKDGLKL), 116–150 (DAFIVPSLLKASRNLLDREFGKMIHCLVLKFSYES), 151–181 (DAFIVSSLIDMYSKFGEVGNARKVFSDLGEQ), 182–216 (DLVVFNAMISGYANNSQADEALNLVKDMKLLGIKP), 217–251 (DVITWNALISGFSHMRNEEKVSEILELMCLDGYKP), 252–286 (DVVSWTSIISGLVHNFQNEKAFDAFKQMLTHGLYP), 287–321 (NSATIITLLPACTTLAYMKHGKEIHGYSVVTGLED), 322–352 (HGFVRSALLDMYGKCGFISEAMILFRKTPKK), 353–387 (TTVTFNSMIFCYANHGLADKAVELFDQMEATGEKL), 388–418 (DHLTFTAILTACSHAGLTDLGQNLFLLMQNK), and 424–454 (RLEHYACMVDLLGRAGKLVEAYEMIKAMRME). The interval 459-534 (VWGALLAACR…FLGSSWVETV (76 aa)) is type E motif.

It belongs to the PPR family. PCMP-E subfamily.

In Arabidopsis thaliana (Mouse-ear cress), this protein is Pentatricopeptide repeat-containing protein At5g59600 (PCMP-E1).